The primary structure comprises 554 residues: CTP synthase (554 aa).

Positions 1–265 (MTPLIFVTGG…DEIVVNQLKL (265 aa)) are amidoligase domain. Ser13 contributes to the CTP binding site. UTP is bound at residue Ser13. ATP-binding positions include 14–19 (SLGKGI) and Asp71. Residues Asp71 and Glu139 each contribute to the Mg(2+) site. Residues 146 to 148 (DIE), 186 to 191 (KTKPTQ), and Lys222 contribute to the CTP site. UTP is bound by residues 186–191 (KTKPTQ) and Lys222. Residues 292–545 (TIAVVGKYVD…IRAARERKAG (254 aa)) form the Glutamine amidotransferase type-1 domain. Gly353 contacts L-glutamine. Cys380 (nucleophile; for glutamine hydrolysis) is an active-site residue. L-glutamine-binding positions include 381–384 (YGMQ), Glu404, and Arg471. Residues His518 and Glu520 contribute to the active site.

The protein belongs to the CTP synthase family. In terms of assembly, homotetramer.

The enzyme catalyses UTP + L-glutamine + ATP + H2O = CTP + L-glutamate + ADP + phosphate + 2 H(+). The catalysed reaction is L-glutamine + H2O = L-glutamate + NH4(+). It catalyses the reaction UTP + NH4(+) + ATP = CTP + ADP + phosphate + 2 H(+). It functions in the pathway pyrimidine metabolism; CTP biosynthesis via de novo pathway; CTP from UDP: step 2/2. Its activity is regulated as follows. Allosterically activated by GTP, when glutamine is the substrate; GTP has no effect on the reaction when ammonia is the substrate. The allosteric effector GTP functions by stabilizing the protein conformation that binds the tetrahedral intermediate(s) formed during glutamine hydrolysis. Inhibited by the product CTP, via allosteric rather than competitive inhibition. Catalyzes the ATP-dependent amination of UTP to CTP with either L-glutamine or ammonia as the source of nitrogen. Regulates intracellular CTP levels through interactions with the four ribonucleotide triphosphates. This chain is CTP synthase, found in Stenotrophomonas maltophilia (strain R551-3).